The sequence spans 704 residues: MANLQERKSFSKPRISIQASGGTPEAKGIEKRKLSQKRRTLPLQLSLGGHLSPWPTYTSGQTVLHNRKPCSDDSRNRANSCQQQSMSISKPKYLEQLENYLRKELLLLDLSTDSAQELRLQPYREIFEFFIEDFKTYKPLLSSIKNAYEVMLAHQKERIRSLEPLKAKIVTMNEDCSERVLAMRAEERYEISVLKKEKMNLLKLIDKKNEEKISLQSEVAKLRRSLAEEYLRYLTERDARKILIGDLNELRYQQEDMSLAQTPGVWGEDPVKLTLALKMTRQDLTRTQMELNTMKANSGDVVPRRDLEMQEKTNMELQEQLESLKADYEEVQKEHELLLQLHMSTLKERDQFYNELQEIQRTSTPRPDWTKCESIIAGGPERWLVLAEGKNSDQLVDVLLEEIGMGLLREKDFFPGLGFGDAIPPFLRFDGPVKNKKPSKKEVVNLLKDAWKERIAEEQKEPFPDFFFNFLERRFGVNDAMAWAYTIFENIKLFRSSEIMNQFYAVLMGKNLESVYINQKKTLSHLLKELLSVDTQNEGSITMEQFSTILKTTFPLKKEEQIQELMEAVGWGPDSSNTDMLNYRSLFNEDEEGQSEPFVQRLWEQYESDKEAYLEELKQELDLDPLEDVTLLKMRGTLMNIDPTMDKQTLSAYLSQAYQIPAIDVPLEDEEKQGIISIKVETALDRLRMADTKRVGPREPDPAS.

Positions 1 to 37 (MANLQERKSFSKPRISIQASGGTPEAKGIEKRKLSQK) are disordered. 2 coiled-coil regions span residues 190–230 (EISV…AEEY) and 304–342 (RRDL…LQLH).

Interacts with TSNAX. As to expression, specifically expressed in testes. Predominantly detected in the post-meiotic stages of germ cells.

The protein resides in the cytoplasm. The protein localises to the perinuclear region. Functionally, possible role in spermatogenesis. The protein is Translin-associated factor X-interacting protein 1 of Mus musculus (Mouse).